A 230-amino-acid chain; its full sequence is Ropporin-1-like protein (230 aa).

The RIIa domain occupies 17–46; it reads PELPDILKQFTKAAIRTQPADVLRWSAGYF.

It belongs to the ropporin family. As to quaternary structure, component of the axonemal radial spoke complex 1 (RS1), at least composed of spoke head proteins RSPH1, RSPH3, RSPH9 and the cilia-specific component RSPH4A or sperm-specific component RSPH6A, spoke stalk proteins RSPH14, DNAJB13, DYDC1, ROPN1L and NME5, and the anchor protein IQUB. Interacts with FSCB; the interaction increases upon spermatozoa capacitation conditions. May interact with AKAP3. Interacts with CFAP61. Post-translationally, sumoylated, sumoylation decreases upon spermatozoa capacitation conditions.

It localises to the cell projection. The protein resides in the cilium. It is found in the flagellum. Its function is as follows. Functions as part of axonemal radial spoke complexes that play an important part in the motility of sperm and cilia. Important for male fertility. With ROPN1, involved in fibrous sheath integrity and sperm motility, plays a role in PKA-dependent signaling processes required for spermatozoa capacitation. The protein is Ropporin-1-like protein (ROPN1L) of Homo sapiens (Human).